Consider the following 82-residue polypeptide: Small ribosomal subunit protein uS17 (82 aa).

It belongs to the universal ribosomal protein uS17 family. As to quaternary structure, part of the 30S ribosomal subunit.

Its function is as follows. One of the primary rRNA binding proteins, it binds specifically to the 5'-end of 16S ribosomal RNA. The sequence is that of Small ribosomal subunit protein uS17 from Shewanella denitrificans (strain OS217 / ATCC BAA-1090 / DSM 15013).